The following is a 48-amino-acid chain: Small, acid-soluble spore protein P (48 aa).

Residues Met1–Gln19 show a composition bias toward basic and acidic residues. A disordered region spans residues Met1–Met48. Over residues Lys30–Met48 the composition is skewed to basic residues.

This sequence belongs to the SspP family.

The protein resides in the spore core. The protein is Small, acid-soluble spore protein P of Bacillus pumilus (strain SAFR-032).